Consider the following 250-residue polypeptide: Putative inner dynein arm light chain, axonemal (250 aa).

Residues 168–250 (MRKALQAHEE…QLEGITAPKK (83 aa)) are a coiled coil.

It belongs to the inner dynein arm light chain family.

It localises to the cell projection. The protein localises to the cilium. The protein resides in the dynein axonemal particle. In terms of biological role, may play a dynamic role in flagellar motility. The polypeptide is Putative inner dynein arm light chain, axonemal (Drosophila melanogaster (Fruit fly)).